The primary structure comprises 83 residues: uncharacterized protein (83 aa).

Residues 58 to 78 (AVLLWIAIIATLGNIVVVGVV) form a helical membrane-spanning segment.

Its subcellular location is the membrane. This is an uncharacterized protein from Homo sapiens (Human).